Consider the following 280-residue polypeptide: Chaperone protein DnaJ 2 (280 aa).

The J domain occupies 6 to 70 (DYYAILGVPR…EKRRIYDTYG (65 aa)).

It belongs to the DnaJ family. Forms a heterononamer with DnaJ and DafA in the resting state. Three copies of each protein are present in the complex.

The protein localises to the cytoplasm. Functionally, does not influence ATP binding or hydrolysis nor ADP release. Exerts influence on the interaction of DnaK with substrates; in the presence of DafA, DnaJ inhibits substrate binding, and substrate already bound to DnaK is displaced by DnaJ and DafA. The chain is Chaperone protein DnaJ 2 (dnaJ2) from Thermus thermophilus (strain ATCC 27634 / DSM 579 / HB8).